Consider the following 210-residue polypeptide: Kinetochore protein Spc25 (210 aa).

Residues 42-106 (TMENIKRQQH…KKKQERDKLI (65 aa)) adopt a coiled-coil conformation.

The protein belongs to the SPC25 family. In terms of assembly, component of the Ndc80 complex, which is composed of Ndc80, Nuf2 and Spc25.

It is found in the nucleus. It localises to the chromosome. The protein localises to the centromere. Its subcellular location is the kinetochore. Its function is as follows. Acts as a component of the essential kinetochore-associated Ndc80 complex, which is required for chromosome segregation and spindle checkpoint activity during meiosis and mitosis. Required for kinetochore integrity and the organization of stable microtubule binding sites in the outer plate of the kinetochore. Participates in SAC signaling that responds specifically to disruptions in spindle microtubule dynamics. The NDC80 complex synergistically enhances the affinity of the SKA1 complex for microtubules and may allow the NDC80 complex to track depolymerizing microtubules. This is Kinetochore protein Spc25 from Drosophila virilis (Fruit fly).